Reading from the N-terminus, the 114-residue chain is FK506-binding protein 1 (114 aa).

A PPIase FKBP-type domain is found at 26-114; the sequence is GDLVTIHYTG…IFEVELLKVN (89 aa).

The protein belongs to the FKBP-type PPIase family. FKBP1 subfamily.

It is found in the cytoplasm. The enzyme catalyses [protein]-peptidylproline (omega=180) = [protein]-peptidylproline (omega=0). Its activity is regulated as follows. Inhibited by both FK506 and rapamycin. In terms of biological role, PPIases accelerate the folding of proteins. It catalyzes the cis-trans isomerization of proline imidic peptide bonds in oligopeptides. The polypeptide is FK506-binding protein 1 (FPR1) (Eremothecium gossypii (strain ATCC 10895 / CBS 109.51 / FGSC 9923 / NRRL Y-1056) (Yeast)).